Here is a 127-residue protein sequence, read N- to C-terminus: Small ribosomal subunit protein eS8 (127 aa).

This sequence belongs to the eukaryotic ribosomal protein eS8 family. In terms of assembly, part of the 30S ribosomal subunit.

The chain is Small ribosomal subunit protein eS8 from Nanoarchaeum equitans (strain Kin4-M).